A 483-amino-acid polypeptide reads, in one-letter code: 5-hydroxytryptamine receptor 3A (483 aa).

Positions 1–23 (MPLCIPQVLLALFLSVLIAQGEG) are cleaved as a signal peptide. Residues 24-246 (SRRRATQAHS…MKFYVVIRRR (223 aa)) are Extracellular-facing. N-linked (GlcNAc...) asparagine glycans are attached at residues asparagine 109, asparagine 175, and asparagine 191. A disulfide bridge connects residues cysteine 162 and cysteine 176. The chain crosses the membrane as a helical span at residues 247–273 (PLFYAVSLLLPSIFLMVVDIVGFCLPP). The Cytoplasmic portion of the chain corresponds to 274-278 (DSGER). A helical membrane pass occupies residues 279–297 (VSFKITLLLGYSVFLIIVS). Residues 298-307 (DTLPATAIGT) are Extracellular-facing. The chain crosses the membrane as a helical span at residues 308–326 (PLIGVYFVVCMALLVISLA). Over 327–460 (ETIFIVQLVH…GYVLDRLLFR (134 aa)) the chain is Cytoplasmic. Residues 393–414 (VGSPQDLEKTSRSRDSPLPPPR) are disordered. The span at 398–407 (DLEKTSRSRD) shows a compositional bias: basic and acidic residues. Residues 419–455 (AVRGLLQELSSIRHSLEKRDEMREVARDWLRVGYVLD) form an HA-stretch; determines single-channel conductance in 5-HT3 receptors region. The helical transmembrane segment at 461–480 (IYLLAVLAYSITLVTLWSIW) threads the bilayer. The Extracellular portion of the chain corresponds to 481-483 (HYS).

It belongs to the ligand-gated ion channel (TC 1.A.9) family. 5-hydroxytryptamine receptor (TC 1.A.9.2) subfamily. HTR3A sub-subfamily. Forms homopentameric as well as heteropentameric serotonin-activated cation-selective channel complexes with HTR3B or HTR3C or HTR3D or HTR3E. The homomeric complex is functional but exhibits low conductance with modified voltage dependence, and decreased agonist and antagonist affinity. Heteropentameric complexes display properties which resemble that of neuronal serotonin-activated channels in vivo. Interacts with RIC3. In terms of tissue distribution, expressed in central and peripheral neurons.

It localises to the postsynaptic cell membrane. The protein localises to the cell membrane. It catalyses the reaction Na(+)(in) = Na(+)(out). The enzyme catalyses K(+)(in) = K(+)(out). The catalysed reaction is Ca(2+)(in) = Ca(2+)(out). It carries out the reaction Mg(2+)(in) = Mg(2+)(out). Functionally, forms serotonin (5-hydroxytryptamine/5-HT3)-activated cation-selective channel complexes, which when activated cause fast, depolarizing responses in neurons. The polypeptide is 5-hydroxytryptamine receptor 3A (Rattus norvegicus (Rat)).